Here is a 292-residue protein sequence, read N- to C-terminus: Formamidopyrimidine-DNA glycosylase (292 aa).

The active-site Schiff-base intermediate with DNA is the proline 2. The active-site Proton donor is the glutamate 3. Lysine 58 (proton donor; for beta-elimination activity) is an active-site residue. Residues histidine 98, arginine 128, and arginine 173 each contribute to the DNA site. The FPG-type zinc-finger motif lies at leucine 258–histidine 292. Arginine 282 acts as the Proton donor; for delta-elimination activity in catalysis.

Belongs to the FPG family. Monomer. It depends on Zn(2+) as a cofactor.

The catalysed reaction is Hydrolysis of DNA containing ring-opened 7-methylguanine residues, releasing 2,6-diamino-4-hydroxy-5-(N-methyl)formamidopyrimidine.. The enzyme catalyses 2'-deoxyribonucleotide-(2'-deoxyribose 5'-phosphate)-2'-deoxyribonucleotide-DNA = a 3'-end 2'-deoxyribonucleotide-(2,3-dehydro-2,3-deoxyribose 5'-phosphate)-DNA + a 5'-end 5'-phospho-2'-deoxyribonucleoside-DNA + H(+). Its function is as follows. Involved in base excision repair of DNA damaged by oxidation or by mutagenic agents. Acts as a DNA glycosylase that recognizes and removes damaged bases. Has a preference for oxidized purines, such as 7,8-dihydro-8-oxoguanine (8-oxoG). Has AP (apurinic/apyrimidinic) lyase activity and introduces nicks in the DNA strand. Cleaves the DNA backbone by beta-delta elimination to generate a single-strand break at the site of the removed base with both 3'- and 5'-phosphates. The protein is Formamidopyrimidine-DNA glycosylase of Cupriavidus necator (strain ATCC 17699 / DSM 428 / KCTC 22496 / NCIMB 10442 / H16 / Stanier 337) (Ralstonia eutropha).